The following is a 320-amino-acid chain: Beta-ketoacyl-[acyl-carrier-protein] synthase III (320 aa).

Catalysis depends on residues Cys-114 and His-247. Residues 248 to 252 (QANRR) are ACP-binding. Asn-277 is an active-site residue.

The protein belongs to the thiolase-like superfamily. FabH family. In terms of assembly, homodimer.

Its subcellular location is the cytoplasm. It catalyses the reaction malonyl-[ACP] + acetyl-CoA + H(+) = 3-oxobutanoyl-[ACP] + CO2 + CoA. The protein operates within lipid metabolism; fatty acid biosynthesis. Functionally, catalyzes the condensation reaction of fatty acid synthesis by the addition to an acyl acceptor of two carbons from malonyl-ACP. Catalyzes the first condensation reaction which initiates fatty acid synthesis and may therefore play a role in governing the total rate of fatty acid production. Possesses both acetoacetyl-ACP synthase and acetyl transacylase activities. Its substrate specificity determines the biosynthesis of branched-chain and/or straight-chain of fatty acids. This Neisseria meningitidis serogroup C (strain 053442) protein is Beta-ketoacyl-[acyl-carrier-protein] synthase III.